A 182-amino-acid polypeptide reads, in one-letter code: Ribosome-recycling factor (182 aa).

This sequence belongs to the RRF family.

Its subcellular location is the cytoplasm. Functionally, responsible for the release of ribosomes from messenger RNA at the termination of protein biosynthesis. May increase the efficiency of translation by recycling ribosomes from one round of translation to another. This chain is Ribosome-recycling factor, found in Mycoplasma capricolum subsp. capricolum (strain California kid / ATCC 27343 / NCTC 10154).